The primary structure comprises 96 residues: Protein Vpr (96 aa).

Positions M1–L42 are homooligomerization. Phosphoserine; by host occurs at positions 79, 94, and 96.

Belongs to the HIV-1 VPR protein family. In terms of assembly, homooligomer, may form homodimer. Interacts with p6-gag region of the Pr55 Gag precursor protein through a (Leu-X-X)4 motif near the C-terminus of the P6gag protein. Interacts with host UNG. May interact with host RAD23A/HHR23A. Interacts with host VPRBP/DCAF1, leading to hijack the CUL4A-RBX1-DDB1-DCAF1/VPRBP complex, mediating ubiquitination of host proteins such as TERT and ZGPAT and arrest of the cell cycle in G2 phase. In terms of processing, phosphorylated on several residues by host. These phosphorylations regulate VPR activity for the nuclear import of the HIV-1 pre-integration complex.

Its subcellular location is the virion. It is found in the host nucleus. It localises to the host extracellular space. In terms of biological role, during virus replication, may deplete host UNG protein, and incude G2-M cell cycle arrest. Acts by targeting specific host proteins for degradation by the 26S proteasome, through association with the cellular CUL4A-DDB1 E3 ligase complex by direct interaction with host VPRPB/DCAF-1. Cell cycle arrest reportedly occurs within hours of infection and is not blocked by antiviral agents, suggesting that it is initiated by the VPR carried into the virion. Additionally, VPR induces apoptosis in a cell cycle dependent manner suggesting that these two effects are mechanistically linked. Detected in the serum and cerebrospinal fluid of AIDS patient, VPR may also induce cell death to bystander cells. During virus entry, plays a role in the transport of the viral pre-integration (PIC) complex to the host nucleus. This function is crucial for viral infection of non-dividing macrophages. May act directly at the nuclear pore complex, by binding nucleoporins phenylalanine-glycine (FG)-repeat regions. This chain is Protein Vpr, found in Human immunodeficiency virus type 1 group M subtype B (isolate SF33) (HIV-1).